Here is a 638-residue protein sequence, read N- to C-terminus: Signal recognition particle receptor subunit alpha (638 aa).

3 disordered regions span residues 129 to 205, 218 to 245, and 262 to 315; these read KIRA…VELS, IQKH…KKAP, and SAPT…ATKG. Composition is skewed to basic and acidic residues over residues 137–146 and 153–165; these read KKFEDSEKAK and IETR…EKAK. Residue serine 177 is modified to Phosphoserine. The span at 218 to 239 shows a compositional bias: basic and acidic residues; sequence IQKHGRGLEKSSKSTKSDAPKE. The residue at position 284 (threonine 284) is a Phosphothreonine. 3 positions are modified to phosphoserine: serine 296, serine 297, and serine 298. A compositionally biased stretch (polar residues) spans 304 to 314; that stretch reads AQNASKPSATK. An NG domain region spans residues 419–636; sequence YVVTFCGVNG…NAKAVVAALM (218 aa). 425-432 contacts GTP; sequence GVNGVGKS. Serine 473 carries the phosphoserine modification. Residue 520-524 participates in GTP binding; the sequence is DTAGR. At threonine 578 the chain carries Phosphothreonine. 588–591 is a binding site for GTP; the sequence is TKFD.

The protein belongs to the GTP-binding SRP family. In terms of assembly, heterodimer with SRPRB. Interacts with the signal recognition particle (SRP) complex subunit SRP54.

It is found in the endoplasmic reticulum membrane. Its function is as follows. Component of the SRP (signal recognition particle) receptor. Ensures, in conjunction with the signal recognition particle, the correct targeting of the nascent secretory proteins to the endoplasmic reticulum membrane system. Forms a guanosine 5'-triphosphate (GTP)-dependent complex with the SRP subunit SRP54. SRP receptor compaction and GTPase rearrangement drive SRP-mediated cotranslational protein translocation into the ER. The polypeptide is Signal recognition particle receptor subunit alpha (Canis lupus familiaris (Dog)).